An 801-amino-acid chain; its full sequence is Cation/H(+) antiporter 7 (801 aa).

13 helical membrane-spanning segments follow: residues 58–78 (PNLE…EILF), 83–103 (IPIP…LFSY), 128–148 (GAFG…VGML), 154–174 (RAAL…YILM), 192–212 (EIIL…LTDL), 223–243 (VQSC…GTVL), 254–274 (IVIV…MLWI), 287–307 (VYIY…LNFF), 312–332 (YGWF…SALI), 340–360 (VGVL…ISWL), 377–397 (AISV…ITAF), 407–427 (IVLA…LGYI), and 438–458 (FTIA…AIEF).

This sequence belongs to the monovalent cation:proton antiporter 2 (CPA2) transporter (TC 2.A.37) family. CHX (TC 2.A.37.4) subfamily. As to expression, expressed in pollen.

Its subcellular location is the membrane. Its function is as follows. May operate as a cation/H(+) antiporter. This Arabidopsis thaliana (Mouse-ear cress) protein is Cation/H(+) antiporter 7 (CHX7).